A 1252-amino-acid polypeptide reads, in one-letter code: Myosin-1 (1252 aa).

Residues 1–27 form a disordered region; it reads MAPSKKAGKKVTPASKKSAGQGKVAKA. The region spanning 38–712 is the Myosin motor domain; sequence VGVSDMTLLT…TLFALETMRD (675 aa). 128-135 is an ATP binding site; sequence GESGAGKT. A Phosphoserine modification is found at serine 356. The segment at 403-485 is actin-binding; it reads IIGILDIFGF…PGIFAALNDA (83 aa). IQ domains lie at 716–736 and 737–762; these read HNMA…KHEC and ARRI…YGHQ. In terms of domain architecture, TH1 spans 770–953; that stretch reads RRRFSLLSYR…TVHVASGEPP (184 aa). Disordered stretches follow at residues 945 to 1049 and 1103 to 1228; these read VHVA…PETP and PPKA…PATA. Composition is skewed to pro residues over residues 989-999 and 1028-1046; these read RSVPKPKPVAQ and RPPP…PAKP. The SH3 domain occupies 1046–1104; the sequence is PETPMYRAKFAFEGQEGEMSLKKDDVVELVEKDDNGWWLVKMDGVEGWAPNNYLELVPP. The span at 1162–1175 shows a compositional bias: polar residues; that stretch reads ADTTPASSRPSSAI. Residues 1178 to 1193 show a composition bias toward pro residues; that stretch reads KPPPPVAAKPKPPVIP. Residues 1194 to 1203 show a composition bias toward low complexity; sequence VKPSVSAKGP. A compositionally biased stretch (pro residues) spans 1204-1215; that stretch reads AKPPIPTAPRPP. The span at 1216–1228 shows a compositional bias: low complexity; the sequence is AASTSRSSKPATA.

This sequence belongs to the TRAFAC class myosin-kinesin ATPase superfamily. Myosin family. Post-translationally, phosphorylation of the TEDS site (Ser-356) is required for the polarization of the actin cytoskeleton. Phosphorylation probably activates the myosin-I ATPase activity.

The protein resides in the cytoplasm. Its subcellular location is the cytoskeleton. It is found in the actin patch. Its function is as follows. Type-I myosin implicated in the organization of the actin cytoskeleton. Required for proper actin cytoskeleton polarization. At the cell cortex, assembles in patch-like structures together with proteins from the actin-polymerizing machinery and promotes actin assembly. Functions as actin nucleation-promoting factor (NPF) for the Arp2/3 complex. This Laccaria bicolor (strain S238N-H82 / ATCC MYA-4686) (Bicoloured deceiver) protein is Myosin-1 (MYO1).